An 827-amino-acid polypeptide reads, in one-letter code: Zinc phosphodiesterase ELAC protein 2 (827 aa).

A mitochondrion-targeting transit peptide spans Met-1–Met-16. Disordered stretches follow at residues Thr-15 to Pro-46 and Ser-181 to Pro-220. The segment covering Ser-181–Arg-192 has biased composition (basic and acidic residues). Ser-193, Ser-197, Ser-202, Ser-207, Ser-617, and Ser-735 each carry phosphoserine. A compositionally biased stretch (polar residues) spans Asn-199 to Pro-210. The tract at residues Leu-794 to Gln-827 is disordered. Thr-795 carries the phosphothreonine modification. Ser-800 is modified (phosphoserine). Residues Ser-801–His-817 show a composition bias toward basic and acidic residues. Residue Ser-818 is modified to Phosphoserine.

The protein belongs to the RNase Z family. Homodimer. Interacts with PTCD1. Zn(2+) is required as a cofactor.

The protein localises to the mitochondrion. Its subcellular location is the mitochondrion matrix. The protein resides in the mitochondrion nucleoid. It is found in the nucleus. The enzyme catalyses Endonucleolytic cleavage of RNA, removing extra 3' nucleotides from tRNA precursor, generating 3' termini of tRNAs. A 3'-hydroxy group is left at the tRNA terminus and a 5'-phosphoryl group is left at the trailer molecule.. Functionally, zinc phosphodiesterase, which displays mitochondrial tRNA 3'-processing endonuclease activity. Involved in tRNA maturation, by removing a 3'-trailer from precursor tRNA. Associates with mitochondrial DNA complexes at the nucleoids to initiate RNA processing and ribosome assembly. The chain is Zinc phosphodiesterase ELAC protein 2 (Elac2) from Rattus norvegicus (Rat).